The chain runs to 100 residues: NADH-quinone oxidoreductase subunit K (100 aa).

A run of 3 helical transmembrane segments spans residues 2 to 22, 28 to 48, and 63 to 83; these read VTLN…LVGV, LLML…GLVA, and FFII…LILW.

It belongs to the complex I subunit 4L family. NDH-1 is composed of 14 different subunits. Subunits NuoA, H, J, K, L, M, N constitute the membrane sector of the complex.

It is found in the cell inner membrane. The enzyme catalyses a quinone + NADH + 5 H(+)(in) = a quinol + NAD(+) + 4 H(+)(out). Functionally, NDH-1 shuttles electrons from NADH, via FMN and iron-sulfur (Fe-S) centers, to quinones in the respiratory chain. The immediate electron acceptor for the enzyme in this species is believed to be ubiquinone. Couples the redox reaction to proton translocation (for every two electrons transferred, four hydrogen ions are translocated across the cytoplasmic membrane), and thus conserves the redox energy in a proton gradient. The protein is NADH-quinone oxidoreductase subunit K of Wolinella succinogenes (strain ATCC 29543 / DSM 1740 / CCUG 13145 / JCM 31913 / LMG 7466 / NCTC 11488 / FDC 602W) (Vibrio succinogenes).